We begin with the raw amino-acid sequence, 396 residues long: Mevalonate kinase (396 aa).

ATP is bound by residues lysine 13, asparagine 55, serine 135, and 140-146 (GAGLGSS). Serine 146 functions as the Proton donor in the catalytic mechanism. The Mg(2+) site is built by serine 146 and glutamate 193. Residue aspartate 204 is the Proton acceptor of the active site.

This sequence belongs to the GHMP kinase family. Mevalonate kinase subfamily. As to quaternary structure, homodimer. Mg(2+) is required as a cofactor.

Its subcellular location is the cytoplasm. The protein resides in the peroxisome. It carries out the reaction (R)-mevalonate + ATP = (R)-5-phosphomevalonate + ADP + H(+). The protein operates within isoprenoid biosynthesis; isopentenyl diphosphate biosynthesis via mevalonate pathway; isopentenyl diphosphate from (R)-mevalonate: step 1/3. Its activity is regulated as follows. Farnesyl pyrophosphate and geranyl pyrophosphate inhibit mevalonate kinase activity by binding competitively at the ATP-binding sites. Its function is as follows. Catalyzes the phosphorylation of mevalonate to mevalonate 5-phosphate, a key step in isoprenoid and cholesterol biosynthesis. The chain is Mevalonate kinase from Bos taurus (Bovine).